A 428-amino-acid chain; its full sequence is Dihydroorotase (428 aa).

Zn(2+)-binding residues include His-60 and His-62. Substrate is bound by residues 62-64 and Asn-94; that span reads HLR. Asp-152, His-179, and His-232 together coordinate Zn(2+). Asn-278 is a binding site for substrate. Asp-305 contacts Zn(2+). The active site involves Asp-305. Substrate contacts are provided by residues His-309 and 323–324; that span reads FG.

The protein belongs to the metallo-dependent hydrolases superfamily. DHOase family. Class I DHOase subfamily. Zn(2+) serves as cofactor.

The enzyme catalyses (S)-dihydroorotate + H2O = N-carbamoyl-L-aspartate + H(+). It functions in the pathway pyrimidine metabolism; UMP biosynthesis via de novo pathway; (S)-dihydroorotate from bicarbonate: step 3/3. In terms of biological role, catalyzes the reversible cyclization of carbamoyl aspartate to dihydroorotate. The chain is Dihydroorotase from Anoxybacillus flavithermus (strain DSM 21510 / WK1).